The following is a 400-amino-acid chain: Argininosuccinate synthase (400 aa).

8–16 (AYSGGLDTS) lines the ATP pocket. Tyrosine 86 and serine 91 together coordinate L-citrulline. ATP is bound at residue glycine 116. L-aspartate is bound by residues threonine 118, asparagine 122, and aspartate 123. Asparagine 122 contacts L-citrulline. L-citrulline is bound by residues arginine 126, serine 175, serine 184, glutamate 260, and tyrosine 272.

It belongs to the argininosuccinate synthase family. Type 1 subfamily. Homotetramer.

Its subcellular location is the cytoplasm. It catalyses the reaction L-citrulline + L-aspartate + ATP = 2-(N(omega)-L-arginino)succinate + AMP + diphosphate + H(+). The protein operates within amino-acid biosynthesis; L-arginine biosynthesis; L-arginine from L-ornithine and carbamoyl phosphate: step 2/3. This chain is Argininosuccinate synthase, found in Clostridium acetobutylicum (strain ATCC 824 / DSM 792 / JCM 1419 / IAM 19013 / LMG 5710 / NBRC 13948 / NRRL B-527 / VKM B-1787 / 2291 / W).